The following is a 24-amino-acid chain: Formate ester dehydrogenase gamma chain (24 aa).

Heterotrimer composed of an alpha, a beta and a gamma chain.

The protein is Formate ester dehydrogenase gamma chain of Amycolatopsis methanolica.